We begin with the raw amino-acid sequence, 258 residues long: UPF0328 protein ECU07_0060 (258 aa).

The protein belongs to the UPF0328 family.

This chain is UPF0328 protein ECU07_0060, found in Encephalitozoon cuniculi (strain GB-M1) (Microsporidian parasite).